The chain runs to 115 residues: NADH-ubiquinone oxidoreductase chain 3 (115 aa).

3 consecutive transmembrane segments (helical) span residues 3-23 (LVMA…IAFW), 55-75 (FFLV…LLPL), and 86-106 (TMLI…AYEW).

It belongs to the complex I subunit 3 family. Core subunit of respiratory chain NADH dehydrogenase (Complex I) which is composed of 45 different subunits. Interacts with TMEM186. Interacts with TMEM242.

It is found in the mitochondrion inner membrane. It carries out the reaction a ubiquinone + NADH + 5 H(+)(in) = a ubiquinol + NAD(+) + 4 H(+)(out). Functionally, core subunit of the mitochondrial membrane respiratory chain NADH dehydrogenase (Complex I) which catalyzes electron transfer from NADH through the respiratory chain, using ubiquinone as an electron acceptor. Essential for the catalytic activity of complex I. This chain is NADH-ubiquinone oxidoreductase chain 3, found in Hippopotamus amphibius (Hippopotamus).